The chain runs to 307 residues: Protoheme IX farnesyltransferase (307 aa).

9 helical membrane passes run 28-48, 50-70, 100-120, 122-142, 149-169, 176-196, 218-238, 243-263, and 282-302; these read VTQL…PGMV, WPVL…AFAI, ILLF…VFAN, LTMW…TLLL, NIVI…AAVA, AWIL…ALAL, FTLL…ILPF, SGYL…VHAW, and IVYL…KFGP.

This sequence belongs to the UbiA prenyltransferase family. Protoheme IX farnesyltransferase subfamily.

It localises to the cell inner membrane. The enzyme catalyses heme b + (2E,6E)-farnesyl diphosphate + H2O = Fe(II)-heme o + diphosphate. It participates in porphyrin-containing compound metabolism; heme O biosynthesis; heme O from protoheme: step 1/1. Functionally, converts heme B (protoheme IX) to heme O by substitution of the vinyl group on carbon 2 of heme B porphyrin ring with a hydroxyethyl farnesyl side group. The chain is Protoheme IX farnesyltransferase from Ralstonia nicotianae (strain ATCC BAA-1114 / GMI1000) (Ralstonia solanacearum).